The primary structure comprises 268 residues: Small ribosomal subunit protein uS3 (268 aa).

Residues 40–110 (IRNLFFINYR…KLDLTINEIG (71 aa)) enclose the KH type-2 domain.

Belongs to the universal ribosomal protein uS3 family. Part of the 30S ribosomal subunit. Forms a tight complex with proteins S10 and S14.

In terms of biological role, binds the lower part of the 30S subunit head. Binds mRNA in the 70S ribosome, positioning it for translation. This is Small ribosomal subunit protein uS3 from Mycoplasma genitalium (strain ATCC 33530 / DSM 19775 / NCTC 10195 / G37) (Mycoplasmoides genitalium).